The sequence spans 640 residues: 1,4-alpha-glucan branching enzyme GlgB (640 aa).

Asp318 acts as the Nucleophile in catalysis. Glu371 acts as the Proton donor in catalysis.

It belongs to the glycosyl hydrolase 13 family. GlgB subfamily. As to quaternary structure, monomer.

The enzyme catalyses Transfers a segment of a (1-&gt;4)-alpha-D-glucan chain to a primary hydroxy group in a similar glucan chain.. The protein operates within glycan biosynthesis; glycogen biosynthesis. Catalyzes the formation of the alpha-1,6-glucosidic linkages in glycogen by scission of a 1,4-alpha-linked oligosaccharide from growing alpha-1,4-glucan chains and the subsequent attachment of the oligosaccharide to the alpha-1,6 position. The sequence is that of 1,4-alpha-glucan branching enzyme GlgB from Francisella tularensis subsp. tularensis (strain FSC 198).